Consider the following 205-residue polypeptide: Adenylyl-sulfate kinase (205 aa).

31 to 38 contributes to the ATP binding site; that stretch reads GLSGAGKS. The Phosphoserine intermediate role is filled by Ser105.

It belongs to the APS kinase family.

The catalysed reaction is adenosine 5'-phosphosulfate + ATP = 3'-phosphoadenylyl sulfate + ADP + H(+). Its pathway is sulfur metabolism; hydrogen sulfide biosynthesis; sulfite from sulfate: step 2/3. Functionally, catalyzes the synthesis of activated sulfate. The sequence is that of Adenylyl-sulfate kinase from Shewanella baltica (strain OS155 / ATCC BAA-1091).